Reading from the N-terminus, the 224-residue chain is Homeobox protein Hox-B6 (224 aa).

The Antp-type hexapeptide motif lies at 127–132; it reads VYPWMQ. The homeobox DNA-binding region spans 146–205; that stretch reads GRRGRQTYTRYQTLELEKEFHYNRYLTRRRRIEIAHALCLTERQIKIWFQNRRMKWKKES. Ser214 is modified (phosphoserine).

The protein belongs to the Antp homeobox family.

It localises to the nucleus. In terms of biological role, sequence-specific transcription factor which is part of a developmental regulatory system that provides cells with specific positional identities on the anterior-posterior axis. This Homo sapiens (Human) protein is Homeobox protein Hox-B6 (HOXB6).